Here is a 414-residue protein sequence, read N- to C-terminus: 2,3-diketo-5-methylthiopentyl-1-phosphate enolase (414 aa).

Catalysis depends on K99, which acts as the Proton acceptor. Substrate-binding positions include K148, 174-177 (KDDE), H265, G338, and 360-361 (GG). The Mg(2+) site is built by K174, D176, and E177. The residue at position 174 (K174) is an N6-carboxylysine.

Belongs to the RuBisCO large chain family. Type IV subfamily. In terms of assembly, homodimer. Mg(2+) serves as cofactor.

The catalysed reaction is 5-methylsulfanyl-2,3-dioxopentyl phosphate = 2-hydroxy-5-methylsulfanyl-3-oxopent-1-enyl phosphate. Its pathway is amino-acid biosynthesis; L-methionine biosynthesis via salvage pathway; L-methionine from S-methyl-5-thio-alpha-D-ribose 1-phosphate: step 3/6. Catalyzes the enolization of 2,3-diketo-5-methylthiopentyl-1-phosphate (DK-MTP-1-P) into 2-hydroxy-3-keto-5-methylthiopentenyl-1-phosphate (HK-MTPenyl-1-P). The protein is 2,3-diketo-5-methylthiopentyl-1-phosphate enolase of Bacillus mycoides (strain KBAB4) (Bacillus weihenstephanensis).